The chain runs to 123 residues: UPF0231 protein PMI2039 (123 aa).

The protein belongs to the UPF0231 family.

This Proteus mirabilis (strain HI4320) protein is UPF0231 protein PMI2039.